We begin with the raw amino-acid sequence, 634 residues long: tRNA uridine 5-carboxymethylaminomethyl modification enzyme MnmG (634 aa).

Position 14 to 19 (14 to 19 (GGGHAG)) interacts with FAD. An NAD(+)-binding site is contributed by 279–293 (GPRYCPSIEDKVVRF).

It belongs to the MnmG family. As to quaternary structure, homodimer. Heterotetramer of two MnmE and two MnmG subunits. Requires FAD as cofactor.

The protein localises to the cytoplasm. Functionally, NAD-binding protein involved in the addition of a carboxymethylaminomethyl (cmnm) group at the wobble position (U34) of certain tRNAs, forming tRNA-cmnm(5)s(2)U34. This is tRNA uridine 5-carboxymethylaminomethyl modification enzyme MnmG from Xanthomonas axonopodis pv. citri (strain 306).